Reading from the N-terminus, the 226-residue chain is Probable peroxiredoxin prdx-3 (226 aa).

The region spanning 33-191 (LGPKNTVPAF…TLRVLKAFQF (159 aa)) is the Thioredoxin domain. C78 functions as the Cysteine sulfenic acid (-SOH) intermediate in the catalytic mechanism.

The protein belongs to the peroxiredoxin family. AhpC/Prx1 subfamily. As to quaternary structure, homodimer; disulfide-linked, upon oxidation.

The enzyme catalyses a hydroperoxide + [thioredoxin]-dithiol = an alcohol + [thioredoxin]-disulfide + H2O. Thiol-specific peroxidase that catalyzes the reduction of hydrogen peroxide and organic hydroperoxides to water and alcohols, respectively. Plays a role in cell protection against oxidative stress by detoxifying peroxides and as sensor of hydrogen peroxide-mediated signaling events. In Caenorhabditis elegans, this protein is Probable peroxiredoxin prdx-3 (prdx-3).